The chain runs to 89 residues: Protein RALF-like 5 (89 aa).

A signal peptide spans 1-25; it reads MLKAQVFMFVTVLVFVCVFINSNDA. Intrachain disulfides connect Cys-39–Cys-48 and Cys-61–Cys-67.

Belongs to the plant rapid alkalinization factor (RALF) family.

Its subcellular location is the secreted. Cell signaling peptide that may regulate plant stress, growth, and development. Mediates a rapid alkalinization of extracellular space by mediating a transient increase in the cytoplasmic Ca(2+) concentration leading to a calcium-dependent signaling events through a cell surface receptor and a concomitant activation of some intracellular mitogen-activated protein kinases. This is Protein RALF-like 5 (RALFL5) from Arabidopsis thaliana (Mouse-ear cress).